The primary structure comprises 395 residues: S-adenosylmethionine synthase (395 aa).

His16 provides a ligand contact to ATP. Mg(2+) is bound at residue Asp18. Glu44 lines the K(+) pocket. L-methionine-binding residues include Glu57 and Gln100. The segment at 100-110 (QSPDIAQGVDR) is flexible loop. Residues 167–169 (DAK), 233–234 (RF), Asp242, 248–249 (RK), Ala265, and Lys269 each bind ATP. Asp242 lines the L-methionine pocket. Lys273 serves as a coordination point for L-methionine.

Belongs to the AdoMet synthase family. As to quaternary structure, homotetramer; dimer of dimers. Mg(2+) is required as a cofactor. Requires K(+) as cofactor.

The protein resides in the cytoplasm. It catalyses the reaction L-methionine + ATP + H2O = S-adenosyl-L-methionine + phosphate + diphosphate. The protein operates within amino-acid biosynthesis; S-adenosyl-L-methionine biosynthesis; S-adenosyl-L-methionine from L-methionine: step 1/1. Functionally, catalyzes the formation of S-adenosylmethionine (AdoMet) from methionine and ATP. The overall synthetic reaction is composed of two sequential steps, AdoMet formation and the subsequent tripolyphosphate hydrolysis which occurs prior to release of AdoMet from the enzyme. The protein is S-adenosylmethionine synthase of Burkholderia vietnamiensis (strain G4 / LMG 22486) (Burkholderia cepacia (strain R1808)).